A 329-amino-acid chain; its full sequence is DNA-directed RNA polymerase subunit alpha (329 aa).

Positions 1-235 (MQGSVTEFLK…EQLEAFVDLR (235 aa)) are alpha N-terminal domain (alpha-NTD). The tract at residues 249–329 (FDPILLRPVD…NWPPASIADE (81 aa)) is alpha C-terminal domain (alpha-CTD).

This sequence belongs to the RNA polymerase alpha chain family. Homodimer. The RNAP catalytic core consists of 2 alpha, 1 beta, 1 beta' and 1 omega subunit. When a sigma factor is associated with the core the holoenzyme is formed, which can initiate transcription.

It catalyses the reaction RNA(n) + a ribonucleoside 5'-triphosphate = RNA(n+1) + diphosphate. DNA-dependent RNA polymerase catalyzes the transcription of DNA into RNA using the four ribonucleoside triphosphates as substrates. This Enterobacter sp. (strain 638) protein is DNA-directed RNA polymerase subunit alpha.